The following is a 486-amino-acid chain: Glycogen synthase 2 (486 aa).

Lys-15 is a binding site for ADP-alpha-D-glucose.

It belongs to the glycosyltransferase 1 family. Bacterial/plant glycogen synthase subfamily.

It carries out the reaction [(1-&gt;4)-alpha-D-glucosyl](n) + ADP-alpha-D-glucose = [(1-&gt;4)-alpha-D-glucosyl](n+1) + ADP + H(+). The protein operates within glycan biosynthesis; glycogen biosynthesis. In terms of biological role, synthesizes alpha-1,4-glucan chains using ADP-glucose. The sequence is that of Glycogen synthase 2 (glgA2) from Rhizobium meliloti (strain 1021) (Ensifer meliloti).